Reading from the N-terminus, the 131-residue chain is Small ribosomal subunit protein bS6 (131 aa).

Residues 98–131 (EASPMVKAKDERRERREDFANETADDSEAGDSEE) form a disordered region. Over residues 104–116 (KAKDERRERREDF) the composition is skewed to basic and acidic residues. Over residues 120-131 (TADDSEAGDSEE) the composition is skewed to acidic residues.

Belongs to the bacterial ribosomal protein bS6 family.

Binds together with bS18 to 16S ribosomal RNA. The polypeptide is Small ribosomal subunit protein bS6 (Klebsiella pneumoniae subsp. pneumoniae (strain ATCC 700721 / MGH 78578)).